The following is a 215-amino-acid chain: Small ribosomal subunit protein uS3c (215 aa).

The 74-residue stretch at 43-116 (IKNYIKKNMK…KLNMAITRIA (74 aa)) folds into the KH type-2 domain.

It belongs to the universal ribosomal protein uS3 family. In terms of assembly, part of the 30S ribosomal subunit.

It is found in the plastid. The protein localises to the chloroplast. The protein is Small ribosomal subunit protein uS3c (rps3) of Morus indica (Mulberry).